Here is a 338-residue protein sequence, read N- to C-terminus: Phosphate acyltransferase (338 aa).

Belongs to the PlsX family. As to quaternary structure, homodimer. Probably interacts with PlsY.

It localises to the cytoplasm. The enzyme catalyses a fatty acyl-[ACP] + phosphate = an acyl phosphate + holo-[ACP]. The protein operates within lipid metabolism; phospholipid metabolism. Catalyzes the reversible formation of acyl-phosphate (acyl-PO(4)) from acyl-[acyl-carrier-protein] (acyl-ACP). This enzyme utilizes acyl-ACP as fatty acyl donor, but not acyl-CoA. This is Phosphate acyltransferase from Mannheimia succiniciproducens (strain KCTC 0769BP / MBEL55E).